Reading from the N-terminus, the 361-residue chain is DNA replication and repair protein RecF (361 aa).

30–37 lines the ATP pocket; that stretch reads GPNGSGKT.

This sequence belongs to the RecF family.

The protein resides in the cytoplasm. The RecF protein is involved in DNA metabolism; it is required for DNA replication and normal SOS inducibility. RecF binds preferentially to single-stranded, linear DNA. It also seems to bind ATP. The chain is DNA replication and repair protein RecF from Yersinia pestis.